The following is a 221-amino-acid chain: Ribonuclease T (221 aa).

An Exonuclease domain is found at 21-195 (VVVDVETAGF…YDAEKTADLF (175 aa)). Mg(2+) is bound by residues aspartate 24, glutamate 26, histidine 182, and aspartate 187. Histidine 182 serves as the catalytic Proton donor/acceptor.

The protein belongs to the RNase T family. In terms of assembly, homodimer. Requires Mg(2+) as cofactor.

Its function is as follows. Trims short 3' overhangs of a variety of RNA species, leaving a one or two nucleotide 3' overhang. Responsible for the end-turnover of tRNA: specifically removes the terminal AMP residue from uncharged tRNA (tRNA-C-C-A). Also appears to be involved in tRNA biosynthesis. In Marinobacter nauticus (strain ATCC 700491 / DSM 11845 / VT8) (Marinobacter aquaeolei), this protein is Ribonuclease T.